A 132-amino-acid polypeptide reads, in one-letter code: Small ribosomal subunit protein uS8 (132 aa).

This sequence belongs to the universal ribosomal protein uS8 family. In terms of assembly, part of the 30S ribosomal subunit. Contacts proteins S5 and S12.

One of the primary rRNA binding proteins, it binds directly to 16S rRNA central domain where it helps coordinate assembly of the platform of the 30S subunit. This chain is Small ribosomal subunit protein uS8, found in Sinorhizobium fredii (strain NBRC 101917 / NGR234).